Reading from the N-terminus, the 533-residue chain is MEVLGLLKFEVSGTVVTVTLSVVLLALLKWYSTSAFSRLRKLGIRHPEPSPFVGNLMFFRQGFWESHLELRERYGPLCGYYLGRRMYIVISDPDMIKEVLVENFSNFSNRMASGLEPKLIADSVLMLRDRRWEEVRGALMSAFSPEKLNEMTPLISQACELLLSHLKHSAASGDAFDIQRCYCCFTTNVVASVAFGIEVNSQDAPEDPFVQHCQRVFAFSTPRPLLALILSFPSIMVPLARILPNKNRDELNGFFNTLIRNVIALRDKQTAEERRGDFLQMVLDAQRSMSSVGVEAFDMVTEALSSAECMGDPPQRCHPTSTAKPLTVDEIAGQAFLFLIAGHEITTNTLSFITYLLATHPECQERLLKEVDLFMEKHPAPEYCNLQEGLPYLDMVVAETLRMYPPAFRFTREAAQDCEVLGQHIPAGSVLEIAVGALHHDPEHWPNPETFDPERFTAEARLQQKPFTYLPFGAGPRSCLGVRLGLLVVKLTLLQVLHKFRFEACPETQVPLQLESKSALCPKNGVYVKIVSR.

Residues 1 to 10 are Cytoplasmic-facing; the sequence is MEVLGLLKFE. The chain crosses the membrane as a helical span at residues 11 to 31; it reads VSGTVVTVTLSVVLLALLKWY. Residues 32-75 are Lumenal-facing; the sequence is STSAFSRLRKLGIRHPEPSPFVGNLMFFRQGFWESHLELRERYG. The helical transmembrane segment at 76-96 threads the bilayer; sequence PLCGYYLGRRMYIVISDPDMI. Residues 97–223 lie on the Cytoplasmic side of the membrane; sequence KEVLVENFSN…QRVFAFSTPR (127 aa). A helical membrane pass occupies residues 224–244; that stretch reads PLLALILSFPSIMVPLARILP. The Lumenal portion of the chain corresponds to 245–335; sequence NKNRDELNGF…LTVDEIAGQA (91 aa). A helical membrane pass occupies residues 336–356; sequence FLFLIAGHEITTNTLSFITYL. Topologically, residues 357 to 533 are cytoplasmic; it reads LATHPECQER…NGVYVKIVSR (177 aa). Cys-479 is a binding site for heme.

It belongs to the cytochrome P450 family. In terms of assembly, monomer. The cofactor is heme. Expressed in bone marrow, spleen, lung, thymus, liver, uterus, and macrophages.

It is found in the endoplasmic reticulum membrane. It carries out the reaction prostaglandin H2 = thromboxane A2. The catalysed reaction is prostaglandin H2 = (12S)-hydroxy-(5Z,8E,10E)-heptadecatrienoate + malonaldehyde. The enzyme catalyses a hydroperoxyeicosatetraenoate = an oxoeicosatetraenoate + H2O. It catalyses the reaction (15S)-hydroperoxy-(5Z,8Z,11Z,13E)-eicosatetraenoate = 15-oxo-(5Z,8Z,11Z,13E)-eicosatetraenoate + H2O. It carries out the reaction (15S)-hydroperoxy-(5Z,8Z,11Z,13E)-eicosatetraenoate + AH2 = (15S)-hydroxy-(5Z,8Z,11Z,13E)-eicosatetraenoate + A + H2O. In terms of biological role, catalyzes the conversion of prostaglandin H2 (PGH2) to thromboxane A2 (TXA2), a potent inducer of blood vessel constriction and platelet aggregation. Also cleaves PGH2 to 12-hydroxy-heptadecatrienoicacid (12-HHT) and malondialdehyde, which is known to act as a mediator of DNA damage. 12-HHT and malondialdehyde are formed stoichiometrically in the same amounts as TXA2. Additionally, displays dehydratase activity, toward (15S)-hydroperoxy-(5Z,8Z,11Z,13E)-eicosatetraenoate (15(S)-HPETE) producing 15-KETE and 15-HETE. The polypeptide is Thromboxane-A synthase (Tbxas1) (Rattus norvegicus (Rat)).